Here is an 88-residue protein sequence, read N- to C-terminus: Large ribosomal subunit protein bL27 (88 aa).

Residues 1 to 24 are disordered; sequence MAHKKGTGSTRNGRDSNSKRLGVK.

The protein belongs to the bacterial ribosomal protein bL27 family.

This Prochlorococcus marinus (strain MIT 9313) protein is Large ribosomal subunit protein bL27.